Consider the following 401-residue polypeptide: Argininosuccinate synthase (401 aa).

An ATP-binding site is contributed by 9 to 17 (AYSGGLDTS). Position 86 (Tyr86) interacts with L-citrulline. Gly116 is a binding site for ATP. L-aspartate contacts are provided by Thr118, Asn122, and Asp123. An L-citrulline-binding site is contributed by Asn122. Residues Arg126, Ser174, Ser183, Glu259, and Tyr271 each coordinate L-citrulline.

Belongs to the argininosuccinate synthase family. Type 1 subfamily. As to quaternary structure, homotetramer.

The protein resides in the cytoplasm. The catalysed reaction is L-citrulline + L-aspartate + ATP = 2-(N(omega)-L-arginino)succinate + AMP + diphosphate + H(+). It participates in amino-acid biosynthesis; L-arginine biosynthesis; L-arginine from L-ornithine and carbamoyl phosphate: step 2/3. The polypeptide is Argininosuccinate synthase (Bacillus cereus (strain B4264)).